We begin with the raw amino-acid sequence, 396 residues long: Elongation factor Tu (396 aa).

In terms of domain architecture, tr-type G spans 10–205 (KPHVNIGTIG…AVDESIPDPV (196 aa)). Positions 19-26 (GHVDHGKT) are G1. Position 19-26 (19-26 (GHVDHGKT)) interacts with GTP. T26 contributes to the Mg(2+) binding site. The G2 stretch occupies residues 62 to 66 (GITIN). A G3 region spans residues 83–86 (DAPG). Residues 83-87 (DAPGH) and 138-141 (NKAD) each bind GTP. Positions 138 to 141 (NKAD) are G4. The tract at residues 175 to 177 (SGL) is G5.

It belongs to the TRAFAC class translation factor GTPase superfamily. Classic translation factor GTPase family. EF-Tu/EF-1A subfamily. Monomer.

The protein localises to the cytoplasm. It carries out the reaction GTP + H2O = GDP + phosphate + H(+). Its function is as follows. GTP hydrolase that promotes the GTP-dependent binding of aminoacyl-tRNA to the A-site of ribosomes during protein biosynthesis. The chain is Elongation factor Tu from Nocardia farcinica (strain IFM 10152).